We begin with the raw amino-acid sequence, 492 residues long: Bifunctional protein GlmU (492 aa).

A pyrophosphorylase region spans residues Met-1 to Arg-241. Residues Leu-12–Gly-15, Lys-26, Gln-83, and Gly-88–Thr-89 contribute to the UDP-N-acetyl-alpha-D-glucosamine site. Asp-114 contacts Mg(2+). UDP-N-acetyl-alpha-D-glucosamine-binding residues include Gly-151, Glu-166, Asn-181, and Asn-239. Asn-239 contacts Mg(2+). Positions Val-242–Ala-262 are linker. An N-acetyltransferase region spans residues Gly-263–Pro-492. UDP-N-acetyl-alpha-D-glucosamine contacts are provided by Arg-344 and Lys-362. Catalysis depends on His-374, which acts as the Proton acceptor. UDP-N-acetyl-alpha-D-glucosamine-binding residues include Tyr-377 and Asn-388. Residues Ala-391, Asn-397–Tyr-398, and Ala-434 each bind acetyl-CoA. The tract at residues Pro-443–Pro-492 is disordered.

The protein in the N-terminal section; belongs to the N-acetylglucosamine-1-phosphate uridyltransferase family. It in the C-terminal section; belongs to the transferase hexapeptide repeat family. As to quaternary structure, homotrimer. Mg(2+) is required as a cofactor.

Its subcellular location is the cytoplasm. It carries out the reaction alpha-D-glucosamine 1-phosphate + acetyl-CoA = N-acetyl-alpha-D-glucosamine 1-phosphate + CoA + H(+). It catalyses the reaction N-acetyl-alpha-D-glucosamine 1-phosphate + UTP + H(+) = UDP-N-acetyl-alpha-D-glucosamine + diphosphate. The protein operates within nucleotide-sugar biosynthesis; UDP-N-acetyl-alpha-D-glucosamine biosynthesis; N-acetyl-alpha-D-glucosamine 1-phosphate from alpha-D-glucosamine 6-phosphate (route II): step 2/2. It functions in the pathway nucleotide-sugar biosynthesis; UDP-N-acetyl-alpha-D-glucosamine biosynthesis; UDP-N-acetyl-alpha-D-glucosamine from N-acetyl-alpha-D-glucosamine 1-phosphate: step 1/1. It participates in bacterial outer membrane biogenesis; LPS lipid A biosynthesis. Functionally, catalyzes the last two sequential reactions in the de novo biosynthetic pathway for UDP-N-acetylglucosamine (UDP-GlcNAc). The C-terminal domain catalyzes the transfer of acetyl group from acetyl coenzyme A to glucosamine-1-phosphate (GlcN-1-P) to produce N-acetylglucosamine-1-phosphate (GlcNAc-1-P), which is converted into UDP-GlcNAc by the transfer of uridine 5-monophosphate (from uridine 5-triphosphate), a reaction catalyzed by the N-terminal domain. This Mycobacterium ulcerans (strain Agy99) protein is Bifunctional protein GlmU.